Here is a 278-residue protein sequence, read N- to C-terminus: Embryonic polyadenylate-binding protein 2 (278 aa).

2 disordered regions span residues 21-66 (VSSD…GDAG) and 101-128 (EGTPRPPGVQQQAEEEEGTAAGQLLSPE). Residues 35–50 (ETKEILGPEGGEGKEE) show a composition bias toward basic and acidic residues. Residues 51–63 (KEEEEDAEEDQDG) are compositionally biased toward acidic residues. Residues 147-224 (RSVYVGNVDY…RVIKVLPKRT (78 aa)) form the RRM domain. The tract at residues 227-278 (PGISSTDRGGLRGHPGSRGAPFPHSGLQGRPRLRPQGQNRARGKFSPWFSPY) is disordered.

As to expression, expressed in various adult tissues.

The protein localises to the cytoplasm. In terms of biological role, binds the poly(A) tail of mRNA. The chain is Embryonic polyadenylate-binding protein 2 (PABPN1L) from Homo sapiens (Human).